A 427-amino-acid chain; its full sequence is ATP-dependent RNA helicase DDX39A (427 aa).

Acidic residues predominate over residues 1 to 19 (MAEQDVENDLLDYDEEEEP). Residues 1-34 (MAEQDVENDLLDYDEEEEPQAPQESTPAPPKKDI) are disordered. Position 2 is an N-acetylalanine (alanine 2). A Glycyl lysine isopeptide (Lys-Gly) (interchain with G-Cter in SUMO2) cross-link involves residue lysine 31. Lysine 35 bears the N6-acetyllysine; alternate mark. Lysine 35 is covalently cross-linked (Glycyl lysine isopeptide (Lys-Gly) (interchain with G-Cter in SUMO2); alternate). Phosphoserine is present on serine 37. A Q motif motif is present at residues 44–72 (SGFRDFLLKPELLRAIVDCGFEHPSEVQH). In terms of domain architecture, Helicase ATP-binding spans 75 to 248 (IPQAILGMDV…RKFMQDPMEV (174 aa)). An ATP-binding site is contributed by 88 to 95 (AKSGMGKT). Glycyl lysine isopeptide (Lys-Gly) (interchain with G-Cter in SUMO2) cross-links involve residues lysine 154 and lysine 162. Threonine 171 carries the post-translational modification Phosphothreonine. The short motif at 195–198 (DECD) is the DECD box element. Glycyl lysine isopeptide (Lys-Gly) (interchain with G-Cter in SUMO2) cross-links involve residues lysine 240 and lysine 255. In terms of domain architecture, Helicase C-terminal spans 260–421 (GLQQYYVKLK…ELPEEIDIST (162 aa)). Position 426 is a phosphoserine (serine 426).

It belongs to the DEAD box helicase family. DECD subfamily. Binds ALYREF/THOC4 and DDX39B/BAT1. Interacts with the apo-AREX complex component SARNP. Interacts with MX1. Interacts with MCM3AP isoform GANP. Interacts with ECD. Interacts with PHAX; this interaction stimulates PHAX RNA binding activity. In terms of assembly, (Microbial infection) Interacts with human cytomegalovirus/HHV-5 protein UL69. In terms of processing, SUMOylated by RANBP2; SUMOylation modification affects its ability to bind RNA. In terms of tissue distribution, detected in testis, and at lower levels in brain, kidney, lung, thymus, spleen and salivary gland.

It localises to the nucleus. Its subcellular location is the cytoplasm. It carries out the reaction ATP + H2O = ADP + phosphate + H(+). Functionally, helicase that plays an essential role in mRNA export and is involved in multiple steps in RNA metabolism including alternative splicing. Regulates nuclear mRNA export to the cytoplasm through association with ECD. Also involved in spliceosomal uridine-rich small nuclear RNA (U snRNA) export by stimulating the RNA binding of adapter PHAX. Plays a role in the negative regulation of type I IFN production by increasing the nuclear retention of antiviral transcripts and thus reducing their protein expression. Independently of the interferon pathway, plays an antiviral role against alphaviruses by binding to a 5' conserved sequence element in the viral genomic RNA. This is ATP-dependent RNA helicase DDX39A (DDX39A) from Homo sapiens (Human).